The primary structure comprises 99 residues: MEEKNGWNIYMVTMKNGNIYTGISNNVLKRFDTHCNGKGAKCLRGKGPLKLSWFSKANYSHGEAASLEYTIKKQTKKVKLQIIKLNVLDVKTFLNGKMK.

A GIY-YIG domain is found at 5 to 81 (NGWNIYMVTM…KKQTKKVKLQ (77 aa)).

The chain is Putative GIY-YIG domain-containing protein 242L from Invertebrate iridescent virus 6 (IIV-6).